Reading from the N-terminus, the 392-residue chain is Galactokinase (392 aa).

40–43 (EHID) is a substrate binding site. Residues serine 74 and 128–134 (GSGLSSS) each bind ATP. Positions 134 and 167 each coordinate Mg(2+). Aspartate 179 acts as the Proton acceptor in catalysis. A substrate-binding site is contributed by tyrosine 229.

The protein belongs to the GHMP kinase family. GalK subfamily.

The protein localises to the cytoplasm. It carries out the reaction alpha-D-galactose + ATP = alpha-D-galactose 1-phosphate + ADP + H(+). Its pathway is carbohydrate metabolism; galactose metabolism. In terms of biological role, catalyzes the transfer of the gamma-phosphate of ATP to D-galactose to form alpha-D-galactose-1-phosphate (Gal-1-P). This is Galactokinase from Clostridium tetani (strain Massachusetts / E88).